Consider the following 362-residue polypeptide: UDP-3-O-acylglucosamine N-acyltransferase (362 aa).

H251 acts as the Proton acceptor in catalysis.

It belongs to the transferase hexapeptide repeat family. LpxD subfamily. As to quaternary structure, homotrimer.

It catalyses the reaction a UDP-3-O-[(3R)-3-hydroxyacyl]-alpha-D-glucosamine + a (3R)-hydroxyacyl-[ACP] = a UDP-2-N,3-O-bis[(3R)-3-hydroxyacyl]-alpha-D-glucosamine + holo-[ACP] + H(+). It participates in bacterial outer membrane biogenesis; LPS lipid A biosynthesis. Catalyzes the N-acylation of UDP-3-O-acylglucosamine using 3-hydroxyacyl-ACP as the acyl donor. Is involved in the biosynthesis of lipid A, a phosphorylated glycolipid that anchors the lipopolysaccharide to the outer membrane of the cell. This is UDP-3-O-acylglucosamine N-acyltransferase from Cupriavidus pinatubonensis (strain JMP 134 / LMG 1197) (Cupriavidus necator (strain JMP 134)).